We begin with the raw amino-acid sequence, 1582 residues long: Nik-related protein kinase (1582 aa).

In terms of domain architecture, Protein kinase spans 25–313 (FSLDKTIGLG…SANMLQHPFV (289 aa)). Residues 31 to 39 (IGLGTYGRI) and Lys-54 each bind ATP. Residue Asp-177 is the Proton acceptor of the active site. Low complexity-rich tracts occupy residues 492-507 (QVQS…QTQT), 527-538 (PEQQRQGQAPEQ), and 551-572 (EQNQ…AQAE). The disordered stretch occupies residues 492–579 (QVQSQVSKKQ…QAETEAEEPE (88 aa)). Positions 725 to 759 (QRRQRRWEDIFNQHEEELRQVDKDKEDESSDNDEV) form a coiled coil. 2 disordered regions span residues 783-859 (EVQE…PPYS) and 926-1156 (ASAD…GSGM). Composition is skewed to polar residues over residues 803-814 (FSSSVPQRSLLE), 825-834 (RSSQNRQNWL), and 850-859 (RRSQSSPPYS). A phosphoserine mark is found at Ser-852 and Ser-855. Positions 926–944 (ASADTDGDDDDESNDTFED) are enriched in acidic residues. 2 stretches are compositionally biased toward basic and acidic residues: residues 965-978 (VCKD…KFVD) and 999-1016 (GSCK…EEAY). A phosphoserine mark is found at Ser-1027, Ser-1031, and Ser-1034. Basic and acidic residues-rich tracts occupy residues 1043–1061 (QEEH…EGDG) and 1125–1135 (PDHESDNKDIS). Positions 1136–1154 (ESSTQSDFSANHSSPSKGS) are enriched in polar residues. Positions 1209-1552 (TSEICCGSLW…RFLCTRGDKL (344 aa)) constitute a CNH domain.

Belongs to the protein kinase superfamily. STE Ser/Thr protein kinase family. STE20 subfamily.

It carries out the reaction L-seryl-[protein] + ATP = O-phospho-L-seryl-[protein] + ADP + H(+). The catalysed reaction is L-threonyl-[protein] + ATP = O-phospho-L-threonyl-[protein] + ADP + H(+). May phosphorylate cofilin-1 and induce actin polymerization through this process, during the late stages of embryogenesis. Involved in the TNF-alpha-induced signaling pathway. In Homo sapiens (Human), this protein is Nik-related protein kinase (NRK).